The chain runs to 194 residues: FMN-dependent NADH:quinone oxidoreductase (194 aa).

Residues Ser9, 15–17 (SIS), and 85–88 (MYNF) contribute to the FMN site.

The protein belongs to the azoreductase type 1 family. In terms of assembly, homodimer. FMN serves as cofactor.

The enzyme catalyses 2 a quinone + NADH + H(+) = 2 a 1,4-benzosemiquinone + NAD(+). The catalysed reaction is N,N-dimethyl-1,4-phenylenediamine + anthranilate + 2 NAD(+) = 2-(4-dimethylaminophenyl)diazenylbenzoate + 2 NADH + 2 H(+). Functionally, quinone reductase that provides resistance to thiol-specific stress caused by electrophilic quinones. In terms of biological role, also exhibits azoreductase activity. Catalyzes the reductive cleavage of the azo bond in aromatic azo compounds to the corresponding amines. The sequence is that of FMN-dependent NADH:quinone oxidoreductase from Xanthomonas oryzae pv. oryzae (strain KACC10331 / KXO85).